We begin with the raw amino-acid sequence, 362 residues long: E3 ubiquitin-protein ligase TM129 (362 aa).

Topologically, residues 1–6 are lumenal; sequence MESPAV. Residues 7–27 traverse the membrane as a helical segment; it reads TFTLAYVVFSVCFVFTPNEFH. The Cytoplasmic portion of the chain corresponds to 28-56; it reads SAGITVQNLLSGWLGSEDVAFVHYHIRRS. The helical transmembrane segment at 57–77 threads the bilayer; the sequence is SATLLAHSLLPMGYFIGMCFA. The Lumenal segment spans residues 78-94; sequence APEKELYNVHKAADGWK. A helical membrane pass occupies residues 95 to 115; sequence VFVLMAVLLPIATSILAFYWS. Over 116-362 the chain is Cytoplasmic; that stretch reads QKRWSNHPLA…FCIVDVCIVR (247 aa). The RING-type; degenerate zinc finger occupies 285 to 350; the sequence is CIGCMQTNAN…SSQVPCPTCR (66 aa).

This sequence belongs to the TMEM129 family. Integral component of ER-resident dislocation complexes.

The protein resides in the endoplasmic reticulum membrane. The enzyme catalyses S-ubiquitinyl-[E2 ubiquitin-conjugating enzyme]-L-cysteine + [acceptor protein]-L-lysine = [E2 ubiquitin-conjugating enzyme]-L-cysteine + N(6)-ubiquitinyl-[acceptor protein]-L-lysine.. Its pathway is protein modification; protein ubiquitination. Its function is as follows. E3 ubiquitin-protein ligase involved in ER-associated protein degradation, preferentially associates with the E2 enzyme UBE2J2. In Xenopus laevis (African clawed frog), this protein is E3 ubiquitin-protein ligase TM129 (tmem129).